Consider the following 333-residue polypeptide: Adenosine deaminase (333 aa).

2 residues coordinate Zn(2+): H12 and H14. 3 residues coordinate substrate: H14, D16, and G170. H197 provides a ligand contact to Zn(2+). E200 functions as the Proton donor in the catalytic mechanism. D278 serves as a coordination point for Zn(2+). A substrate-binding site is contributed by D279.

It belongs to the metallo-dependent hydrolases superfamily. Adenosine and AMP deaminases family. Adenosine deaminase subfamily. The cofactor is Zn(2+).

It catalyses the reaction adenosine + H2O + H(+) = inosine + NH4(+). It carries out the reaction 2'-deoxyadenosine + H2O + H(+) = 2'-deoxyinosine + NH4(+). Catalyzes the hydrolytic deamination of adenosine and 2-deoxyadenosine. The sequence is that of Adenosine deaminase from Salmonella agona (strain SL483).